The chain runs to 309 residues: MANSLYQKHIISIPELSREELELIVETAGQLKKEPRPELIKNKVVASCFFEPSTRTRLSFETAIQRIGGDVIGFDNGGNTSLAKKGETLSDSVQVISSYVDAFVMRHPQEGAARLASEFSNGVPVINAGDGANQHPTQTLLDLYTIAETQSRLDNLNVAFVGDLKYGRTVHSLTQALAKFNNIRFFFVAPEALAMPDYLCEELDEAGIQYSLHTDMESVIPELDILYMTRVQKERFDESEYAHIKSAYILTAALLEGARENLKVLHPLPRVDEITTDVDVTPHAYYFQQAENGVYARQALLALVLNETL.

The carbamoyl phosphate site is built by Arg-55 and Thr-56. Residue Lys-85 participates in L-aspartate binding. The carbamoyl phosphate site is built by Arg-106, His-135, and Gln-138. Residues Arg-168 and Arg-230 each contribute to the L-aspartate site. Residues Leu-268 and Pro-269 each contribute to the carbamoyl phosphate site.

Belongs to the aspartate/ornithine carbamoyltransferase superfamily. ATCase family. Heterododecamer (2C3:3R2) of six catalytic PyrB chains organized as two trimers (C3), and six regulatory PyrI chains organized as three dimers (R2).

The catalysed reaction is carbamoyl phosphate + L-aspartate = N-carbamoyl-L-aspartate + phosphate + H(+). Its pathway is pyrimidine metabolism; UMP biosynthesis via de novo pathway; (S)-dihydroorotate from bicarbonate: step 2/3. In terms of biological role, catalyzes the condensation of carbamoyl phosphate and aspartate to form carbamoyl aspartate and inorganic phosphate, the committed step in the de novo pyrimidine nucleotide biosynthesis pathway. The protein is Aspartate carbamoyltransferase catalytic subunit of Vibrio campbellii (strain ATCC BAA-1116).